The following is a 103-amino-acid chain: Secreted Ly-6/uPAR-related protein 1 (103 aa).

An N-terminal signal peptide occupies residues 1–22; that stretch reads MASRWAVQLLLVAAWSMGCGEA. The 50-residue stretch at 24–73 folds into the UPAR/Ly6 domain; that stretch reads KCYTCKEPMTSASCRTITRCKPEDTACMTTLVTVEAEYPFNQSPVVTRSC. Intrachain disulfides connect C25-C50, C28-C37, C43-C73, C77-C93, and C94-C99.

In terms of assembly, homodimer. Interacts with PLAU. Interacts with CHRNA7. In terms of tissue distribution, granulocytes. Expressed in skin. Predominantly expressed in the granular layer of skin, notably the acrosyringium. Identified in several biological fluids such as sweat, saliva, tears, plasma and urine.

Its subcellular location is the secreted. In terms of biological role, has an antitumor activity. Was found to be a marker of late differentiation of the skin. Implicated in maintaining the physiological and structural integrity of the keratinocyte layers of the skin. In vitro down-regulates keratinocyte proliferation; the function may involve the proposed role as modulator of nicotinic acetylcholine receptors (nAChRs) activity. In vitro inhibits alpha-7-dependent nAChR currents in an allosteric manner. In T cells may be involved in regulation of intracellular Ca(2+) signaling. Seems to have an immunomodulatory function in the cornea. The function may implicate a possible role as a scavenger receptor for PLAU thereby blocking PLAU-dependent functions of PLAUR such as in cell migration and proliferation. The sequence is that of Secreted Ly-6/uPAR-related protein 1 (SLURP1) from Homo sapiens (Human).